Reading from the N-terminus, the 288-residue chain is Galactose/N-acetyl-D-galactosamine lectin light subunit 1 (288 aa).

Positions Met-1–Thr-15 are cleaved as a signal peptide. N-linked (GlcNAc...) asparagine glycans are attached at residues Asn-205 and Asn-261.

In terms of assembly, heterodimer composed of a 170 kDa heavy subunit (hgl) and a 31/35 kDa light subunit (lgl); disulfide-linked.

The protein resides in the cell membrane. Its function is as follows. Light subunit of a heterodimeric lectin; the heavy subunit binds galactose and N-acetyl-D-galactosamine of host glycoproteins and thus mediates adhesion to host cells. The sequence is that of Galactose/N-acetyl-D-galactosamine lectin light subunit 1 from Entamoeba histolytica (strain ATCC 30459 / HM-1:IMSS / ABRM).